Reading from the N-terminus, the 121-residue chain is uncharacterized protein (121 aa).

The signal sequence occupies residues 1-23; sequence MNFSTVFQAIIAVLGLTTVTALA. N-linked (GlcNAc...) asparagine glycans are attached at residues Asn68 and Asn84.

Post-translationally, N-glycosylated.

This is an uncharacterized protein from Saccharomyces cerevisiae (strain ATCC 204508 / S288c) (Baker's yeast).